A 338-amino-acid polypeptide reads, in one-letter code: Flap endonuclease 1 (338 aa).

Residues 1–98 (MGTDIGDLLQ…ETLNRRKEVR (98 aa)) are N-domain. Residues aspartate 27, aspartate 80, glutamate 152, glutamate 154, aspartate 173, aspartate 175, and aspartate 236 each contribute to the Mg(2+) site. The I-domain stretch occupies residues 116–257 (AAYKYAQASS…TALKLIKKHG (142 aa)). The interval 330-338 (RQQTLDQWF) is interaction with PCNA.

Belongs to the XPG/RAD2 endonuclease family. FEN1 subfamily. Interacts with PCNA. PCNA stimulates the nuclease activity without altering cleavage specificity. Requires Mg(2+) as cofactor.

Functionally, structure-specific nuclease with 5'-flap endonuclease and 5'-3' exonuclease activities involved in DNA replication and repair. During DNA replication, cleaves the 5'-overhanging flap structure that is generated by displacement synthesis when DNA polymerase encounters the 5'-end of a downstream Okazaki fragment. Binds the unpaired 3'-DNA end and kinks the DNA to facilitate 5' cleavage specificity. Cleaves one nucleotide into the double-stranded DNA from the junction in flap DNA, leaving a nick for ligation. Also involved in the base excision repair (BER) pathway. Acts as a genome stabilization factor that prevents flaps from equilibrating into structures that lead to duplications and deletions. Also possesses 5'-3' exonuclease activity on nicked or gapped double-stranded DNA. The polypeptide is Flap endonuclease 1 (Methanosarcina barkeri (strain Fusaro / DSM 804)).